Consider the following 305-residue polypeptide: 2-aminophenol 1,6-dioxygenase beta subunit (305 aa).

The Fe cation site is built by histidine 14, histidine 63, and histidine 196.

This sequence belongs to the LigB/MhpB extradiol dioxygenase family. As to quaternary structure, heterotetramer of 2 alpha and 2 beta subunits. Fe(2+) is required as a cofactor.

The enzyme catalyses 2-aminophenol + O2 = 2-aminomuconate 6-semialdehyde. With respect to regulation, strongly inhibited by CuSO(4), FeCl(3), K(3)[Fe(CN)(6)], AgNO3, HgCl(2) and MnCl(2). In terms of biological role, component of the 2-aminophenol 1,6-dioxygenase complex that catalyzes the ring fission of 2-aminophenol to produce 2-aminomuconic 6-semialdehyde. AmnB seems to be the catalytic subunit of the complex. The enzyme is also active toward 2-amino-p-cresol, 6-amino-m-cresol, 2-amino-m-cresol, 2-amino-4,5-dimethylphenol, 2-amino-4-chlorophenol, and catechol. The polypeptide is 2-aminophenol 1,6-dioxygenase beta subunit (amnB) (Pseudomonas sp).